The sequence spans 716 residues: DEAD-box ATP-dependent RNA helicase 31 (716 aa).

The segment at 99 to 188 (GILKSDDEDE…LRLEDESSDE (90 aa)) is disordered. Residues 110–121 (DRSRGRNQEKRG) show a composition bias toward basic and acidic residues. The segment covering 144-153 (SRIQGKSSEA) has biased composition (polar residues). Residues 155–188 (FRGRKETSFSRDREDEKGLRKREDLRLEDESSDE) show a composition bias toward basic and acidic residues. The short motif at 248-276 (TRFDHYPLSPLSLKAIKDAGYETMTVVQE) is the Q motif element. The region spanning 279-462 (LPIILKGKDV…LVALRRDHEF (184 aa)) is the Helicase ATP-binding domain. ATP is bound at residue 292 to 299 (AKTGTGKT). Positions 410–413 (DEAD) match the DEAD box motif. One can recognise a Helicase C-terminal domain in the interval 497–643 (LREHIMGNVD…IDPETVKKVQ (147 aa)).

This sequence belongs to the DEAD box helicase family.

It carries out the reaction ATP + H2O = ADP + phosphate + H(+). This is DEAD-box ATP-dependent RNA helicase 31 (RH31) from Arabidopsis thaliana (Mouse-ear cress).